We begin with the raw amino-acid sequence, 747 residues long: Endoglucanase C (747 aa).

A signal peptide spans 1 to 37 (MGHVTSPSKRYPASFKRAGSILGVSIALAAFSNVAAA). Residues 38 to 136 (GCEYVVTNSW…TVNGAACTGG (99 aa)) enclose the CBM2 domain. 3 disulfide bridges follow: C39–C133, C183–C214, and C193–C208. The 30-residue stretch at 182–211 (QCNWYGTLYPLCVSTTSGWGYENNRSCISP) folds into the CBM10 domain. Residues 226-283 (GSSSPSSISSSSVRSSSSSSVVPPSSSSSSSVPSSSSSSVSSSSVVSSSSSSVSVPGT) form a disordered region. The segment covering 227-281 (SSSPSSISSSSVRSSSSSSVVPPSSSSSSSVPSSSSSSVSSSSVVSSSSSSVSVP) has biased composition (low complexity). Residues 280–747 (VPGTGVFRVN…TQLLHNMWGL (468 aa)) are catalytic. Catalysis depends on E502, which acts as the Proton donor. The Nucleophile role is filled by E652.

The protein belongs to the glycosyl hydrolase 5 (cellulase A) family.

It carries out the reaction Endohydrolysis of (1-&gt;4)-beta-D-glucosidic linkages in cellulose, lichenin and cereal beta-D-glucans.. This is Endoglucanase C (celC) from Cellvibrio japonicus (strain Ueda107) (Pseudomonas fluorescens subsp. cellulosa).